The primary structure comprises 440 residues: Histidinol dehydrogenase (440 aa).

NAD(+) contacts are provided by tyrosine 139, glutamine 201, and asparagine 224. Substrate is bound by residues serine 247, glutamine 269, and histidine 272. Glutamine 269 and histidine 272 together coordinate Zn(2+). Residues glutamate 337 and histidine 338 each act as proton acceptor in the active site. Substrate-binding residues include histidine 338, aspartate 371, glutamate 425, and histidine 430. Aspartate 371 provides a ligand contact to Zn(2+). Residue histidine 430 participates in Zn(2+) binding.

Belongs to the histidinol dehydrogenase family. Zn(2+) is required as a cofactor.

It catalyses the reaction L-histidinol + 2 NAD(+) + H2O = L-histidine + 2 NADH + 3 H(+). Its pathway is amino-acid biosynthesis; L-histidine biosynthesis; L-histidine from 5-phospho-alpha-D-ribose 1-diphosphate: step 9/9. Functionally, catalyzes the sequential NAD-dependent oxidations of L-histidinol to L-histidinaldehyde and then to L-histidine. This Prochlorococcus marinus (strain MIT 9312) protein is Histidinol dehydrogenase.